A 266-amino-acid chain; its full sequence is Dihydropteroate synthase (266 aa).

In terms of domain architecture, Pterin-binding spans 12-260 (AAIMGILNVT…DVKANQDIVA (249 aa)). Asn19 is a binding site for Mg(2+). Residues Thr59, Asp93, Asn112, Asp176, Lys212, and 248-250 (RVH) each bind (7,8-dihydropterin-6-yl)methyl diphosphate.

It belongs to the DHPS family. Homodimer or homotrimer. The cofactor is Mg(2+).

The catalysed reaction is (7,8-dihydropterin-6-yl)methyl diphosphate + 4-aminobenzoate = 7,8-dihydropteroate + diphosphate. It functions in the pathway cofactor biosynthesis; tetrahydrofolate biosynthesis; 7,8-dihydrofolate from 2-amino-4-hydroxy-6-hydroxymethyl-7,8-dihydropteridine diphosphate and 4-aminobenzoate: step 1/2. Its function is as follows. Catalyzes the condensation of para-aminobenzoate (pABA) with 6-hydroxymethyl-7,8-dihydropterin diphosphate (DHPt-PP) to form 7,8-dihydropteroate (H2Pte), the immediate precursor of folate derivatives. In Streptococcus pyogenes serotype M18 (strain MGAS8232), this protein is Dihydropteroate synthase (folP).